The primary structure comprises 699 residues: MLDHTRAPELNLDLDLDVSNSPKGSMKGNNFKEQDLCPPLPMQGLGKGDKREEQALGPEPSEPRQPTEEEEALIEFHRSYRELFQFFCNNTTIHGAIRLVCSKHNRMKTAFWAVLWLCTFGMMYWQFALLFEEYFSYPVSLNINLNSDKLVFPAVTVCTLNPYRYTEIKEDLEELDRITEQTLFDLYKYNSSYTRQAGGRRRSTRDLRGALPHPLQRLRTPPPPNPARSARSASSSVRDNNPQVDRKDWKIGFQLCNQNKSDCFYQTYSSGVDAVREWYRFHYINILSRLPDTSPALEEEALGSFIFTCRFNQAPCNQANYSQFHHPMYGNCYTFNNKNNSNLWMSSMPGVNNGLSLTLRTEQNDFIPLLSTVTGARVMVHGQDEPAFMDDGGFNVRPGVETSISMRKEALDSLGGNYGDCTENGSDVPVKNLYPSKYTQQVCIHSCFQENMIKKCGCAYIFYPKPKGVEFCDYLKQSSWGYCYYKLQAAFSLDSLGCFSKCRKPCSVTNYKLSAGYSRWPSVKSQDWIFEMLSLQNNYTINNKRNGVAKLNIFFKELNYKTNSESPSVTMVSLLSNLGSQWSLWFGSSVLSVVEMAELIFDLLVITLIMLLHRFRSRYWSPGRGARGAREVASTPASSFPSRFCPHPTSPPPSLPQQGTTPPLALTAPPPAYATLGPSASPLDSAVPGSSACAPAMAL.

Residues 1–71 (MLDHTRAPEL…EPRQPTEEEE (71 aa)) form a disordered region. Topologically, residues 1-110 (MLDHTRAPEL…CSKHNRMKTA (110 aa)) are cytoplasmic. The helical transmembrane segment at 111–131 (FWAVLWLCTFGMMYWQFALLF) threads the bilayer. The Extracellular portion of the chain corresponds to 132 to 589 (EEYFSYPVSL…SQWSLWFGSS (458 aa)). Disulfide bonds link Cys158–Cys332, Cys256–Cys263, Cys309–Cys316, Cys421–Cys506, Cys443–Cys483, Cys443–Cys502, Cys447–Cys498, Cys456–Cys483, Cys456–Cys506, and Cys458–Cys472. Residues 200–270 (RRRSTRDLRG…SDCFYQTYSS (71 aa)) form a gating release of inhibition by proteolysis (GRIP); protease-sensitive region that is responsible for the proteolytic activation of the channel region. Residues 211 to 244 (LPHPLQRLRTPPPPNPARSARSASSSVRDNNPQV) are disordered. The segment covering 227 to 238 (ARSARSASSSVR) has biased composition (low complexity). Residues 590–610 (VLSVVEMAELIFDLLVITLIM) traverse the membrane as a helical segment. The Cytoplasmic segment spans residues 611 to 699 (LLHRFRSRYW…SSACAPAMAL (89 aa)). The interval 637 to 699 (ASSFPSRFCP…SSACAPAMAL (63 aa)) is disordered. Residues 656–667 (PQQGTTPPLALT) are compositionally biased toward low complexity. A PY motif; recruits WW domain-containing proteins and is thereby required for ubiquitination and inhibition of the channel by NEDD4 and NEDD4L motif is present at residues 669–673 (PPPAY).

Belongs to the amiloride-sensitive sodium channel (TC 1.A.6) family. SCNN1A subfamily. As to quaternary structure, heterotrimer; containing an alpha/SCNN1A, a beta/SCNN1B and a gamma/SCNN1G subunit. Interacts with WWP1 (via WW domains). Interacts with WWP2 (via WW domains); inhibits the channel. Interacts with BPIFA1; the interaction is indirect via SCNN1B and inhibits the proteolytic processing of SCNN1A and SCNN1G and the activation of ENaC. Interacts with the full-length immature form of PCSK9 (pro-PCSK9). Post-translationally, ubiquitinated. Can be ubiquitinated at multiple sites and undergo monoubiquitination and polyubiquitination. Ubiquitination by NEDD4 or NEDD4L inhibits the ENaC channel through endocytosis, intracellular retention and degradation of its individual subunits. ENaC is activated through the proteolytic maturation of its subunits. Furin cleaves the SCNN1A subunit, which results in a stepwise increase in the open probability of the channel due to the release of an inhibitory tract. BPIFA1, which is recruited by the SCNN1B subunit, prevents the proteolytic activation of ENaC. In terms of processing, N-glycosylated. In terms of tissue distribution, expressed in kidney (at protein level). Expressed in lung (at protein level). Expressed in the epididymis (at protein level). In the caput and corpus regions of the epididymis, expressed uniformly on the luminal and basal surfaces of the ducts and in the sperm in the duct lumen. Also expressed in distal colon and, at low levels, in liver.

Its subcellular location is the apical cell membrane. The protein resides in the cell projection. It localises to the cilium. The protein localises to the cytoplasmic granule. It is found in the cytoplasm. Its subcellular location is the cytoplasmic vesicle. The protein resides in the secretory vesicle. It localises to the acrosome. The protein localises to the flagellum. It catalyses the reaction Na(+)(in) = Na(+)(out). Originally identified and characterized by its inhibition by the diuretic drug amiloride. Its function is as follows. This is one of the three pore-forming subunits of the heterotrimeric epithelial sodium channel (ENaC), a critical regulator of sodium balance and fluid homeostasis. ENaC operates in epithelial tissues, where it mediates the electrodiffusion of sodium ions from extracellular fluid through the apical membrane of cells, with water following osmotically. It plays a key role in maintaining sodium homeostasis through electrogenic sodium reabsorption in the kidneys. Additionally, ENaC is essential for airway surface liquid homeostasis, which is crucial for proper mucus clearance. This chain is Epithelial sodium channel subunit alpha, found in Mus musculus (Mouse).